Here is a 253-residue protein sequence, read N- to C-terminus: Chitooligosaccharide deacetylase (253 aa).

His-61 and His-126 together coordinate Mg(2+).

The protein belongs to the YdjC deacetylase family. ChbG subfamily. As to quaternary structure, homodimer. It depends on Mg(2+) as a cofactor.

The protein resides in the cytoplasm. The catalysed reaction is N,N'-diacetylchitobiose + H2O = N-acetyl-beta-D-glucosaminyl-(1-&gt;4)-D-glucosamine + acetate. It catalyses the reaction diacetylchitobiose-6'-phosphate + H2O = N'-monoacetylchitobiose-6'-phosphate + acetate. Its pathway is glycan degradation; chitin degradation. Involved in the degradation of chitin. ChbG is essential for growth on the acetylated chitooligosaccharides chitobiose and chitotriose but is dispensable for growth on cellobiose and chitosan dimer, the deacetylated form of chitobiose. Deacetylation of chitobiose-6-P and chitotriose-6-P is necessary for both the activation of the chb promoter by the regulatory protein ChbR and the hydrolysis of phosphorylated beta-glucosides by the phospho-beta-glucosidase ChbF. Catalyzes the removal of only one acetyl group from chitobiose-6-P to yield monoacetylchitobiose-6-P, the inducer of ChbR and the substrate of ChbF. The chain is Chitooligosaccharide deacetylase from Yersinia pseudotuberculosis serotype O:1b (strain IP 31758).